A 62-amino-acid polypeptide reads, in one-letter code: Large ribosomal subunit protein bL33 (62 aa).

This sequence belongs to the bacterial ribosomal protein bL33 family.

This is Large ribosomal subunit protein bL33 from Parabacteroides distasonis (strain ATCC 8503 / DSM 20701 / CIP 104284 / JCM 5825 / NCTC 11152).